Here is a 132-residue protein sequence, read N- to C-terminus: Small ribosomal subunit protein uS8 (132 aa).

The protein belongs to the universal ribosomal protein uS8 family. Part of the 30S ribosomal subunit. Contacts proteins S5 and S12.

Its function is as follows. One of the primary rRNA binding proteins, it binds directly to 16S rRNA central domain where it helps coordinate assembly of the platform of the 30S subunit. The chain is Small ribosomal subunit protein uS8 from Pediococcus pentosaceus (strain ATCC 25745 / CCUG 21536 / LMG 10740 / 183-1w).